Reading from the N-terminus, the 481-residue chain is ATP synthase subunit beta (481 aa).

167-174 is an ATP binding site; it reads GGAGVGKT.

Belongs to the ATPase alpha/beta chains family. F-type ATPases have 2 components, CF(1) - the catalytic core - and CF(0) - the membrane proton channel. CF(1) has five subunits: alpha(3), beta(3), gamma(1), delta(1), epsilon(1). CF(0) has three main subunits: a(1), b(2) and c(9-12). The alpha and beta chains form an alternating ring which encloses part of the gamma chain. CF(1) is attached to CF(0) by a central stalk formed by the gamma and epsilon chains, while a peripheral stalk is formed by the delta and b chains.

The protein resides in the cell membrane. The catalysed reaction is ATP + H2O + 4 H(+)(in) = ADP + phosphate + 5 H(+)(out). Produces ATP from ADP in the presence of a proton gradient across the membrane. The catalytic sites are hosted primarily by the beta subunits. In Corynebacterium jeikeium (strain K411), this protein is ATP synthase subunit beta.